Reading from the N-terminus, the 401-residue chain is Exodeoxyribonuclease 7 large subunit (401 aa).

Belongs to the XseA family. As to quaternary structure, heterooligomer composed of large and small subunits.

It localises to the cytoplasm. The enzyme catalyses Exonucleolytic cleavage in either 5'- to 3'- or 3'- to 5'-direction to yield nucleoside 5'-phosphates.. In terms of biological role, bidirectionally degrades single-stranded DNA into large acid-insoluble oligonucleotides, which are then degraded further into small acid-soluble oligonucleotides. The sequence is that of Exodeoxyribonuclease 7 large subunit from Syntrophotalea carbinolica (strain DSM 2380 / NBRC 103641 / GraBd1) (Pelobacter carbinolicus).